The chain runs to 972 residues: Cycloisomaltooligosaccharide glucanotransferase (972 aa).

Residues 1-38 (MVRFMYALRKRRLSLLLAMSLLVMCVASVVSPPPQALA) form the signal peptide. CBM6 domains are found at residues 421-546 (TRYE…LTLG) and 748-871 (DIYE…LDLD).

The protein belongs to the glycosyl hydrolase 66 family. As to quaternary structure, monomer.

The catalysed reaction is cyclizes part of a (1-&gt;6)-alpha-D-glucan chain by formation of a (1-&gt;6)-alpha-D-glucosidic bond.. Its function is as follows. Produces cycloisomaltooligosaccharide from dextran containing 7, 8 or 9 glucose units. The enzyme is specific for (1-&gt;6)-alpha-D-glucans (dextrans) and, without activity toward (1-&gt;4)-alpha-D-glucans, such as amylose. It also has no activity on oligosaccharides, such as amylopectin and pullulan, containing (1-&gt;6)-alpha-D-glucosidic linkages at branch points. In Niallia circulans (Bacillus circulans), this protein is Cycloisomaltooligosaccharide glucanotransferase.